The sequence spans 99 residues: Mu-hexatoxin-Mg1c (99 aa).

3 disulfides stabilise this stretch: C61–C75, C68–C80, and C74–C94.

This sequence belongs to the neurotoxin 14 (magi-1) family. 09 (magi-1) subfamily. In terms of tissue distribution, expressed by the venom gland.

It localises to the secreted. In terms of biological role, inhibits voltage-gated sodium channels by binding to site 3. Insecticidal neurotoxin. This chain is Mu-hexatoxin-Mg1c, found in Macrothele gigas (Japanese funnel web spider).